Here is a 240-residue protein sequence, read N- to C-terminus: MVLELYLDLLSQPCRAIYIFAKKNNIPFQMHTVELRKGEHLSDAFAQVNPMKKVPAMKDGGFTLCESVAILLYLAHKYKVPDHWYPQDLQARARVDEYLAWQHTTLRRSCLRTLWHKVMFPVFLGEQIRPEMLAATLADLDVNVQVLEDQFLQDKDFLVGPHISLADVVAITELMHPVGGGCPVFEGRPRLAAWYRRVEAAVGKDLFLEAHEVILKVRDCPPADPVIKQKLMPRVLTMIQ.

Residues 2–82 (VLELYLDLLS…YLAHKYKVPD (81 aa)) form the GST N-terminal domain. Glutathione-binding positions include histidine 40, 53–54 (KV), and 66–67 (ES). The region spanning 88–223 (DLQARARVDE…ILKVRDCPPA (136 aa)) is the GST C-terminal domain.

This sequence belongs to the GST superfamily. Theta family. In terms of assembly, homodimer. As to expression, in liver, highest expression found in central vein limiting plate hepatocytes. In lung, expressed mainly in club cells of the bronchiolar epithelium and, at low levels, in type II alveolar cells.

The protein resides in the cytoplasm. The enzyme catalyses RX + glutathione = an S-substituted glutathione + a halide anion + H(+). Functionally, conjugation of reduced glutathione to a wide number of exogenous and endogenous hydrophobic electrophiles. Also binds steroids, bilirubin, carcinogens and numerous organic anions. Has dichloromethane dehalogenase activity. This Rattus norvegicus (Rat) protein is Glutathione S-transferase theta-1 (Gstt1).